The chain runs to 273 residues: Multidrug-efflux transporter 2 regulator (273 aa).

The region spanning 8–77 is the HTH merR-type domain; sequence YFTTGEFSKL…LKEIKCLIKG (70 aa). The H-T-H motif DNA-binding region spans 11–30; it reads TGEFSKLCRVKKQTLFHYDE.

In terms of biological role, activates transcription of the blt gene in response to structurally dissimilar drugs. This is Multidrug-efflux transporter 2 regulator (bltR) from Bacillus subtilis (strain 168).